The following is a 363-amino-acid chain: Mitogen-activated protein kinase 13 (363 aa).

The 287-residue stretch at 33–319 (IPPIEPIGRG…VDEALKQPYL (287 aa)) folds into the Protein kinase domain. ATP-binding positions include 39-47 (IGRGAYGIV) and lysine 62. Aspartate 159 (proton acceptor) is an active-site residue. Residue threonine 191 is modified to Phosphothreonine. A TXY motif is present at residues 191–193 (TEY). The residue at position 193 (tyrosine 193) is a Phosphotyrosine. Phosphothreonine is present on threonine 196.

The protein belongs to the protein kinase superfamily. CMGC Ser/Thr protein kinase family. MAP kinase subfamily. Interacts with MKK6. In terms of processing, dually phosphorylated on Thr-191 and Tyr-193, which activates the enzyme. As to expression, expressed in roots, stems and flower buds.

The catalysed reaction is L-seryl-[protein] + ATP = O-phospho-L-seryl-[protein] + ADP + H(+). It carries out the reaction L-threonyl-[protein] + ATP = O-phospho-L-threonyl-[protein] + ADP + H(+). With respect to regulation, activated by threonine and tyrosine phosphorylation. Activated by the MAP kinase kinase MKK6 in vitro. MKK6-MPK13 module positively regulates lateral root formation. The protein is Mitogen-activated protein kinase 13 (MPK13) of Arabidopsis thaliana (Mouse-ear cress).